A 142-amino-acid polypeptide reads, in one-letter code: Large ribosomal subunit protein uL13 (142 aa).

The protein belongs to the universal ribosomal protein uL13 family. In terms of assembly, part of the 50S ribosomal subunit.

Its function is as follows. This protein is one of the early assembly proteins of the 50S ribosomal subunit, although it is not seen to bind rRNA by itself. It is important during the early stages of 50S assembly. The chain is Large ribosomal subunit protein uL13 from Syntrophotalea carbinolica (strain DSM 2380 / NBRC 103641 / GraBd1) (Pelobacter carbinolicus).